The sequence spans 596 residues: Nuclear receptor subfamily 2 group C member 2 (596 aa).

S19 is modified (phosphoserine; by MAPK). S46 bears the Phosphoserine mark. Phosphoserine; by MAPK occurs at positions 55 and 68. Position 98 is a phosphoserine (S98). The segment at residues 114-189 (VEYCVVCGDK…MGMKMESVQS (76 aa)) is a DNA-binding region (nuclear receptor). 2 NR C4-type zinc fingers span residues 117–137 (CVVC…CEGC) and 153–177 (CRSN…LKKC). K192 participates in a covalent cross-link: Glycyl lysine isopeptide (Lys-Gly) (interchain with G-Cter in SUMO2). Phosphoserine is present on S219. An N6-acetyllysine modification is found at K231. In terms of domain architecture, NR LBD spans 341–583 (GSIHVISRDQ…SIIPYILKME (243 aa)).

The protein belongs to the nuclear hormone receptor family. NR2 subfamily. As to quaternary structure, homodimer; can bind DNA as homodimer. Heterodimer; binds DNA as a heterodimer with NR2C1 required for chromatin remodeling and for binding to promoter regions such as globin DR1 repeats. Interacts with PCAF; the interaction preferentially occurs on the non-phosphorylated form and induces NR2C2-mediated transactivation activity and does not require the ligand-binding domain. Interacts (MAPK-mediated phosphorylated form) with NRIP1; the interaction promotes repression of NR2C2-mediated activity. Interacts with NR2C2AP; the interaction represses selective NR2C2-mediated transcriptional activity. Interacts with NLRP10. Interacts (via ligand-binding region) with transcriptional corepressor JAZF1; the interaction promotes NR2C2-mediated transcriptional repression. Post-translationally, phosphorylation on Ser-19 and Ser-68 is an important regulator of NR2C2-mediated transcriptional activity. Phosphorylation on these residues recruits the corepressor, NRIP1, leading to transcripional repression, whereas the non-phosphorylated form preferentially recruits the coactivator, PCAF.

Its subcellular location is the nucleus. Orphan nuclear receptor that can act as a repressor or activator of transcription. An important repressor of nuclear receptor signaling pathways such as retinoic acid receptor, retinoid X, vitamin D3 receptor, thyroid hormone receptor and estrogen receptor pathways. May regulate gene expression during the late phase of spermatogenesis. Together with NR2C1, forms the core of the DRED (direct repeat erythroid-definitive) complex that represses embryonic and fetal globin transcription including that of GATA1. Binds to hormone response elements (HREs) consisting of two 5'-AGGTCA-3' half site direct repeat consensus sequences. Plays a fundamental role in early embryonic development and embryonic stem cells. Required for normal spermatogenesis and cerebellum development. Appears to be important for neurodevelopmentally regulated behavior. Activates transcriptional activity of LHCG. Antagonist of PPARA-mediated transactivation. The chain is Nuclear receptor subfamily 2 group C member 2 (NR2C2) from Homo sapiens (Human).